A 192-amino-acid chain; its full sequence is MLKKTLLSLTAVSMLASAGSALAAEYKFDKEGQHAFIEFRIKHLGYSWLYGSFNDFDGAFTFDEKNPSADKVNVTINTNSVDTNHAERDKHLRSAEFLNVTKHPQATFTSTEVKKDGEDYDITGNLTLNGVTKPVKLDAKLIGQGDDPWGNYRAGFQAEGTIKLKDFNITTDLGPASQEVELIIAVEGVRQK.

A signal peptide spans 1 to 23; the sequence is MLKKTLLSLTAVSMLASAGSALA.

The protein belongs to the UPF0312 family. Type 1 subfamily.

It localises to the periplasm. This is UPF0312 protein PC1_2518 from Pectobacterium carotovorum subsp. carotovorum (strain PC1).